The sequence spans 235 residues: Large ribosomal subunit protein uL1 (235 aa).

This sequence belongs to the universal ribosomal protein uL1 family. In terms of assembly, part of the 50S ribosomal subunit.

Its function is as follows. Binds directly to 23S rRNA. The L1 stalk is quite mobile in the ribosome, and is involved in E site tRNA release. Protein L1 is also a translational repressor protein, it controls the translation of the L11 operon by binding to its mRNA. This is Large ribosomal subunit protein uL1 from Corynebacterium diphtheriae (strain ATCC 700971 / NCTC 13129 / Biotype gravis).